A 206-amino-acid chain; its full sequence is Thymidylate kinase (206 aa).

10-17 is an ATP binding site; that stretch reads GIDGAGKS.

Belongs to the thymidylate kinase family.

It carries out the reaction dTMP + ATP = dTDP + ADP. In terms of biological role, phosphorylation of dTMP to form dTDP in both de novo and salvage pathways of dTTP synthesis. The chain is Thymidylate kinase from Neisseria meningitidis serogroup C / serotype 2a (strain ATCC 700532 / DSM 15464 / FAM18).